A 601-amino-acid chain; its full sequence is Glutathione-regulated potassium-efflux system protein KefB (601 aa).

A run of 13 helical transmembrane segments spans residues 4 to 24 (SDFL…VPLA), 29 to 49 (IGAV…GLGF), 55 to 75 (EILH…GLEL), 87 to 107 (IFGV…GLLM), 115 to 135 (AAVV…LQLM), 152 to 172 (VLLF…LLAG), 177 to 197 (HFDW…LIGG), 207 to 227 (FIAA…LVLG), 230 to 250 (LFMD…GVLL), 268 to 288 (GLLL…GVLY), 291 to 311 (LLWV…VLYL), 324 to 344 (MQFA…FSTA), and 356 to 376 (ALLL…MKLV). Positions 400–519 (KPQVIVVGFG…AGVTQFSRET (120 aa)) constitute an RCK N-terminal domain.

It belongs to the monovalent cation:proton antiporter 2 (CPA2) transporter (TC 2.A.37) family. KefB subfamily. Interacts with the regulatory subunit KefG.

The protein localises to the cell inner membrane. Activated by adducts between glutathione and electrophiles. Its function is as follows. Pore-forming subunit of a potassium efflux system that confers protection against electrophiles. Catalyzes K(+)/H(+) antiport. The sequence is that of Glutathione-regulated potassium-efflux system protein KefB from Escherichia coli (strain K12).